A 203-amino-acid chain; its full sequence is MRYTGPKVRLSRRAGVPLTRKAVKYFEKRPYPPGEHGRRVRRSTSDYAVRQAEKQKLRWYYDLSEKQLARVYENAKKRPGRTGEEMIAELELRLATVLLRAGFAASIYAARQFINHGHITVDGKKVDIPSYQVKPGQIVSVREKSRKLVPFIEAAEGVHADEKIASYLAVSHKDLTIAVVDRPKREQVPVPFDEQLVVEYYAR.

Residues 92–152 (LRLATVLLRA…EKSRKLVPFI (61 aa)) form the S4 RNA-binding domain.

The protein belongs to the universal ribosomal protein uS4 family. In terms of assembly, part of the 30S ribosomal subunit. Contacts protein S5. The interaction surface between S4 and S5 is involved in control of translational fidelity.

One of the primary rRNA binding proteins, it binds directly to 16S rRNA where it nucleates assembly of the body of the 30S subunit. Functionally, with S5 and S12 plays an important role in translational accuracy. This chain is Small ribosomal subunit protein uS4, found in Thermobifida fusca (strain YX).